A 563-amino-acid polypeptide reads, in one-letter code: Urocanate hydratase (563 aa).

NAD(+) is bound by residues 53–54 (GG), Gln131, 177–179 (GMG), Glu197, Arg202, 243–244 (NA), 264–268 (QTSAH), 274–275 (YL), and Tyr323. Cys411 is a catalytic residue. Gly493 contacts NAD(+).

It belongs to the urocanase family. It depends on NAD(+) as a cofactor.

The protein localises to the cytoplasm. The enzyme catalyses 4-imidazolone-5-propanoate = trans-urocanate + H2O. It functions in the pathway amino-acid degradation; L-histidine degradation into L-glutamate; N-formimidoyl-L-glutamate from L-histidine: step 2/3. Functionally, catalyzes the conversion of urocanate to 4-imidazolone-5-propionate. The polypeptide is Urocanate hydratase (Yersinia enterocolitica serotype O:8 / biotype 1B (strain NCTC 13174 / 8081)).